The sequence spans 533 residues: DELLA protein GAI (533 aa).

Over residues 1–12 (MKRDHHHHHHQD) the composition is skewed to basic residues. Positions 1–24 (MKRDHHHHHHQDKKTMMMNEEDDG) are disordered. A DELLA motif motif is present at residues 28–32 (DELLA). Positions 50–54 (LEQLE) match the LEXLE motif motif. The VHYNP motif motif lies at 73–77 (VHYNP). The GRAS domain maps to 160-529 (VDSQENGVRL…RPLIATSAWK (370 aa)). Residues 167–221 (VRLVHALLACAEAVQKENLTVAEALVKQIGFLAVSQIGAMRKVATYFAEALARRI) form a leucine repeat I (LRI) region. The short motif at 174 to 178 (LACAE) is the LxCxE motif element. Residues 240–305 (QMHFYETCPY…GGPPVFRLTG (66 aa)) are VHIID. Positions 271–275 (VHVID) match the VHIID motif. Positions 319 to 351 (EVGCKLAHLAEAIHVEFEYRGFVANTLADLDAS) are leucine repeat II (LRII). The interval 363–450 (VAVNSVFELH…EVYLGKQICN (88 aa)) is PFYRE. The LXXLL motif motif lies at 371 to 375 (LHKLL). The segment at 453–529 (ACDGPDRVER…RPLIATSAWK (77 aa)) is SAW.

This sequence belongs to the GRAS family. DELLA subfamily. Interacts directly with the GID2/SLY1 component of the SCF(GID2) complex. Interacts (via N-terminus) with GID1A, GID1B and GID1B (via N-terminus). Interacts with the BOI proteins BOI, BRG1, BRG2, BRG3 and NUP58. Interacts with TOPP4. Interacts with TCP14 and TCP15. Interacts with FLZ5. Binds to and coactivates GAF1/IDD2 and ENY/IDD1 at the promoter of GA20OX2 gene. Binds to PDF2 and ATML1. Interacts with the prefoldin alpha subunits PFD3 and PFD5 in the nucleus. Post-translationally, phosphorylated. Gibberellin (GA) induces dephosphorylation of GAI by TOPP4 and subsequent degradation by the proteasomal pathway. In terms of processing, may be ubiquitinated, as suggested by its interaction with GID2. Ubiquitination is however unsure since in contrast to other DELLA proteins, it is not ubiquitinated and degraded upon GA application. Nevertheless, ubiquitination may be triggered by other processes. In terms of tissue distribution, ubiquitously expressed. Expressed in rosette leaves, roots, stems and inflorescences of greenhouse grown.

The protein localises to the nucleus. Its activity is regulated as follows. Transcription activation is repressed by gibberellic acid GA(3) in the presence of TPR4. Functionally, transcriptional regulator that acts as a repressor of the gibberellin (GA) signaling pathway. Transcription coactivator of the zinc finger transcription factors GAF1/IDD2 and ENY/IDD1 in regulation of gibberellin homeostasis and signaling. No effect of the BOI proteins on its stability. Probably acts by participating in large multiprotein complexes that repress transcription of GA-inducible genes. Positively regulates XERICO expression. In contrast to RGA, it is less sensitive to GA. Its activity is probably regulated by other phytohormones such as auxin and ethylene. Involved in the regulation of seed dormancy and germination, including glucose-induced delay of seed germination. Involved in the process leading to microtubules (MTs) dissociation in response to gibberellic acid (GA) probably by mediating the translocation of the prefoldin co-chaperone complex from the cytoplasm to the nucleus. This is DELLA protein GAI from Arabidopsis thaliana (Mouse-ear cress).